The chain runs to 635 residues: Probable extracellular metalloproteinase 1 (635 aa).

The signal sequence occupies residues 1–19 (MHGLLLAAGLLSLPLHVLA). Residues 20–246 (HPQPSTSTSL…VHNVVDYVAH (227 aa)) constitute a propeptide that is removed on maturation. Asn287 carries an N-linked (GlcNAc...) asparagine glycan. His430 is a binding site for Zn(2+). The active site involves Glu431. Position 434 (His434) interacts with Zn(2+). Asn475, Asn594, and Asn623 each carry an N-linked (GlcNAc...) asparagine glycan.

The protein belongs to the peptidase M36 family. The cofactor is Zn(2+).

The protein resides in the secreted. Functionally, secreted metalloproteinase probably acting as a virulence factor. The chain is Probable extracellular metalloproteinase 1 (MEP1) from Arthroderma benhamiae (strain ATCC MYA-4681 / CBS 112371) (Trichophyton mentagrophytes).